The following is a 387-amino-acid chain: Alanine racemase (387 aa).

Catalysis depends on Lys-48, which acts as the Proton acceptor; specific for D-alanine. Lys-48 bears the N6-(pyridoxal phosphate)lysine mark. Position 146 (Arg-146) interacts with substrate. The active-site Proton acceptor; specific for L-alanine is the Tyr-267. Substrate is bound at residue Met-315.

The protein belongs to the alanine racemase family. It depends on pyridoxal 5'-phosphate as a cofactor.

It catalyses the reaction L-alanine = D-alanine. It participates in amino-acid biosynthesis; D-alanine biosynthesis; D-alanine from L-alanine: step 1/1. Functionally, catalyzes the interconversion of L-alanine and D-alanine. May also act on other amino acids. This is Alanine racemase (alr) from Methylacidiphilum infernorum (isolate V4) (Methylokorus infernorum (strain V4)).